The chain runs to 47 residues: LLGRCKVKSNRFHGPCLTDTHCSTVCRGEGYKGGDCHGLRRRCMCLC.

Intrachain disulfides connect C5–C47, C16–C36, C22–C43, and C26–C45.

The protein belongs to the DEFL family.

Fabatins have antibacterial activity against Gram-positive and Gram-negative bacteria. High activity against P.aeruginosa. No activity against S.cerevisiae and C.albicans. In Vicia faba (Broad bean), this protein is Defensin-like protein 1.